The primary structure comprises 172 residues: 3-hydroxydecanoyl-[acyl-carrier-protein] dehydratase (172 aa).

H71 is an active-site residue.

The protein belongs to the thioester dehydratase family. FabA subfamily. In terms of assembly, homodimer.

Its subcellular location is the cytoplasm. It carries out the reaction a (3R)-hydroxyacyl-[ACP] = a (2E)-enoyl-[ACP] + H2O. The catalysed reaction is (3R)-hydroxydecanoyl-[ACP] = (2E)-decenoyl-[ACP] + H2O. The enzyme catalyses (2E)-decenoyl-[ACP] = (3Z)-decenoyl-[ACP]. It functions in the pathway lipid metabolism; fatty acid biosynthesis. In terms of biological role, necessary for the introduction of cis unsaturation into fatty acids. Catalyzes the dehydration of (3R)-3-hydroxydecanoyl-ACP to E-(2)-decenoyl-ACP and then its isomerization to Z-(3)-decenoyl-ACP. Can catalyze the dehydratase reaction for beta-hydroxyacyl-ACPs with saturated chain lengths up to 16:0, being most active on intermediate chain length. The chain is 3-hydroxydecanoyl-[acyl-carrier-protein] dehydratase from Brucella anthropi (strain ATCC 49188 / DSM 6882 / CCUG 24695 / JCM 21032 / LMG 3331 / NBRC 15819 / NCTC 12168 / Alc 37) (Ochrobactrum anthropi).